Reading from the N-terminus, the 132-residue chain is Small ribosomal subunit protein uS8c (132 aa).

Belongs to the universal ribosomal protein uS8 family. Part of the 30S ribosomal subunit.

The protein resides in the plastid. It localises to the chloroplast. In terms of biological role, one of the primary rRNA binding proteins, it binds directly to 16S rRNA central domain where it helps coordinate assembly of the platform of the 30S subunit. The sequence is that of Small ribosomal subunit protein uS8c (rps8) from Illicium oligandrum (Star anise).